Here is a 181-residue protein sequence, read N- to C-terminus: ATP-dependent protease subunit HslV (181 aa).

Threonine 7 is an active-site residue. Positions 166, 169, and 172 each coordinate Na(+).

This sequence belongs to the peptidase T1B family. HslV subfamily. As to quaternary structure, a double ring-shaped homohexamer of HslV is capped on each side by a ring-shaped HslU homohexamer. The assembly of the HslU/HslV complex is dependent on binding of ATP.

Its subcellular location is the cytoplasm. It carries out the reaction ATP-dependent cleavage of peptide bonds with broad specificity.. Its activity is regulated as follows. Allosterically activated by HslU binding. In terms of biological role, protease subunit of a proteasome-like degradation complex believed to be a general protein degrading machinery. The polypeptide is ATP-dependent protease subunit HslV (Anaeromyxobacter dehalogenans (strain 2CP-C)).